The following is a 552-amino-acid chain: Formate--tetrahydrofolate ligase (552 aa).

63–70 (TPFGEGKT) lines the ATP pocket.

Belongs to the formate--tetrahydrofolate ligase family.

The catalysed reaction is (6S)-5,6,7,8-tetrahydrofolate + formate + ATP = (6R)-10-formyltetrahydrofolate + ADP + phosphate. Its pathway is one-carbon metabolism; tetrahydrofolate interconversion. In Caldicellulosiruptor bescii (strain ATCC BAA-1888 / DSM 6725 / KCTC 15123 / Z-1320) (Anaerocellum thermophilum), this protein is Formate--tetrahydrofolate ligase.